The primary structure comprises 149 residues: Large ribosomal subunit protein uL13 (149 aa).

It belongs to the universal ribosomal protein uL13 family. In terms of assembly, part of the 50S ribosomal subunit.

Functionally, this protein is one of the early assembly proteins of the 50S ribosomal subunit, although it is not seen to bind rRNA by itself. It is important during the early stages of 50S assembly. The chain is Large ribosomal subunit protein uL13 from Borrelia recurrentis (strain A1).